Here is a 127-residue protein sequence, read N- to C-terminus: Thioredoxin domain-containing protein 8 (127 aa).

In terms of domain architecture, Thioredoxin spans 1-92 (MVQIIKDTNE…SQKVTLFSRI (92 aa)). Cys-32 and Cys-35 form a disulfide bridge.

It belongs to the thioredoxin family. Testis-specific. Only expressed during spermiogenesis, prominently in the Golgi apparatus of pachytene spermatocytes and round and elongated spermatids, with a transient localization in the developing acrosome of round spermatids (at protein level).

Its subcellular location is the cytoplasm. The protein localises to the golgi apparatus. May be required for post-translational modifications of proteins required for acrosomal biogenesis. May act by reducing disulfide bonds within the sperm. This is Thioredoxin domain-containing protein 8 (TXNDC8) from Homo sapiens (Human).